Reading from the N-terminus, the 361-residue chain is CRISPR system associated protein Cas8 (361 aa).

In terms of assembly, monomer. Can form a Cascade complex with Csa5, Cas7, Cas5a, Cas3 and Cas3'.

Its function is as follows. CRISPR (clustered regularly interspaced short palindromic repeat) is an adaptive immune system that provides protection against mobile genetic elements (viruses, transposable elements and conjugative plasmids). CRISPR clusters contain sequences complementary to antecedent mobile elements and target invading nucleic acids. CRISPR clusters are transcribed and processed into CRISPR RNA (crRNA). This is CRISPR system associated protein Cas8 (cas8a2) from Thermoproteus tenax (strain ATCC 35583 / DSM 2078 / JCM 9277 / NBRC 100435 / Kra 1).